The chain runs to 369 residues: P2X receptor B (369 aa).

The Cytoplasmic segment spans residues 1–25 (MTIDWDSILSYNTIKVVRIRDRRLG). The chain crosses the membrane as a helical span at residues 26–46 (ILHLCFLIVIVLYVVVYSAII). The Lumenal segment spans residues 47 to 369 (KKGYVTTEEP…DKLYHNIEAL (323 aa)). The pore-forming motif stretch occupies residues 283–296 (RHAIRLIFIQTGVI).

It belongs to the P2X receptor family.

The protein localises to the contractile vacuole membrane. Its function is as follows. P2X receptors are ATP-gated ion channels that play a role in intracellular calcium signaling. Not required for the purinergic response to extracellular nucleotides. Not essential for osmoregulation. Inward currents are evoked by intracellular ATP and ATP analogs. Insensitive to the P2 receptor antagonists PPADS and suramin, and also copper ions. Inhibited by sodium ions. Permeable to chloride ions. This is P2X receptor B (p2xB) from Dictyostelium discoideum (Social amoeba).